Here is a 62-residue protein sequence, read N- to C-terminus: Photosystem II reaction center protein Z (62 aa).

A run of 2 helical transmembrane segments spans residues 8–28 (ALFAFIVVSFLLVVGVPVVLA) and 41–61 (FSGIGIWFLLVFLVGILNSFV).

The protein belongs to the PsbZ family. PSII is composed of 1 copy each of membrane proteins PsbA, PsbB, PsbC, PsbD, PsbE, PsbF, PsbH, PsbI, PsbJ, PsbK, PsbL, PsbM, PsbT, PsbY, PsbZ, Psb30/Ycf12, at least 3 peripheral proteins of the oxygen-evolving complex and a large number of cofactors. It forms dimeric complexes.

It is found in the plastid. It localises to the chloroplast thylakoid membrane. Functionally, may control the interaction of photosystem II (PSII) cores with the light-harvesting antenna, regulates electron flow through the 2 photosystem reaction centers. PSII is a light-driven water plastoquinone oxidoreductase, using light energy to abstract electrons from H(2)O, generating a proton gradient subsequently used for ATP formation. The sequence is that of Photosystem II reaction center protein Z from Chlorella vulgaris (Green alga).